Consider the following 170-residue polypeptide: 3-hydroxydecanoyl-[acyl-carrier-protein] dehydratase (170 aa).

Residue His-69 is part of the active site.

This sequence belongs to the thioester dehydratase family. FabA subfamily. As to quaternary structure, homodimer.

The protein localises to the cytoplasm. The enzyme catalyses a (3R)-hydroxyacyl-[ACP] = a (2E)-enoyl-[ACP] + H2O. The catalysed reaction is (3R)-hydroxydecanoyl-[ACP] = (2E)-decenoyl-[ACP] + H2O. It catalyses the reaction (2E)-decenoyl-[ACP] = (3Z)-decenoyl-[ACP]. Its pathway is lipid metabolism; fatty acid biosynthesis. Its function is as follows. Necessary for the introduction of cis unsaturation into fatty acids. Catalyzes the dehydration of (3R)-3-hydroxydecanoyl-ACP to E-(2)-decenoyl-ACP and then its isomerization to Z-(3)-decenoyl-ACP. Can catalyze the dehydratase reaction for beta-hydroxyacyl-ACPs with saturated chain lengths up to 16:0, being most active on intermediate chain length. This chain is 3-hydroxydecanoyl-[acyl-carrier-protein] dehydratase, found in Caulobacter vibrioides (strain ATCC 19089 / CIP 103742 / CB 15) (Caulobacter crescentus).